Consider the following 129-residue polypeptide: Glycine cleavage system H protein (129 aa).

The region spanning 24 to 106 is the Lipoyl-binding domain; that stretch reads IATIGITEFA…YGEGWFLKVR (83 aa). K65 is subject to N6-lipoyllysine.

The protein belongs to the GcvH family. The glycine cleavage system is composed of four proteins: P, T, L and H. (R)-lipoate is required as a cofactor.

Functionally, the glycine cleavage system catalyzes the degradation of glycine. The H protein shuttles the methylamine group of glycine from the P protein to the T protein. In Nostoc punctiforme (strain ATCC 29133 / PCC 73102), this protein is Glycine cleavage system H protein.